The following is a 321-amino-acid chain: Trem-like transcript 2 protein (321 aa).

The signal sequence occupies residues 1–18 (MAPAFLLLLLLWPQGCVS). Over 19-268 (GPSADSVYTK…PSIRHQDVYS (250 aa)) the chain is Extracellular. An Ig-like V-type domain is found at 20 to 121 (PSADSVYTKV…ILYPLMGFQL (102 aa)). Disulfide bonds link C41–C105 and C56–C63. The N-linked (GlcNAc...) asparagine glycan is linked to N89. 2 stretches are compositionally biased toward polar residues: residues 189-220 (GYSFTATSTTSQGPRRTMGSQTVTASPSNARD) and 227-241 (SISTKSGDLSTRSPT). The segment at 189–241 (GYSFTATSTTSQGPRRTMGSQTVTASPSNARDSSAGPESISTKSGDLSTRSPT) is disordered. Residues 269–289 (TVLGVVLTLLVLMLIMVYGFW) traverse the membrane as a helical segment. Over 290-321 (KKRHMASYSMCSDPSTRDPPGRPEPYVEVYLI) the chain is Cytoplasmic.

As to quaternary structure, interacts with CD276 and this interaction enhances T-cell activation. In terms of tissue distribution, detected in cultured B-cells, T-cell leukemia and monocyte leukemia. Expressed constitutively on CD8 T-cells and induced on CD4 T-cells after activation.

The protein localises to the cell membrane. Functionally, cell surface receptor that may play a role in the innate and adaptive immune response. Acts as a counter-receptor for CD276 and interaction with CD276 on T-cells enhances T-cell activation. The protein is Trem-like transcript 2 protein (TREML2) of Homo sapiens (Human).